We begin with the raw amino-acid sequence, 321 residues long: Transcription factor ATOH8 (321 aa).

Disordered regions lie at residues 59 to 193 and 203 to 222; these read GLRD…SSYS and HQDS…AASS. Pro residues predominate over residues 70–85; the sequence is VPVPVPVPVPVAPAVP. Residues 93-109 are compositionally biased toward basic and acidic residues; it reads AGERGGSRAPEVSDARK. The span at 121 to 132 shows a compositional bias: pro residues; sequence LPTPPPPPPPAP. Positions 133 to 143 are enriched in low complexity; the sequence is QSQAPGGPEAQ. Over residues 160–186 the composition is skewed to pro residues; it reads PARPAPSAPPAPPAPPESTVRPAPPTR. The segment at 230–243 is basic motif; degenerate; sequence TRRLLANARERTRV. The bHLH domain maps to 230-282; sequence TRRLLANARERTRVHTISAAFEALRKQVPCYSYGQKLSKLAILRIACNYILSL. The interval 244–282 is helix-loop-helix motif; it reads HTISAAFEALRKQVPCYSYGQKLSKLAILRIACNYILSL.

Efficient DNA binding requires dimerization with another bHLH protein. Interacts with NEUROG3 and NEUROD1. Interacts with ZFPM2; mediates indirect interaction with GATA4. Forms a heterodimer with TCF3; repress transcription of TCF3 and TCF3/NEUROG3 dimer-induced transactivation of E box-dependent promoters. In terms of tissue distribution, expressed in lung, liver, kidney, heart and pancreas. Expressed in endothel of umbilical vessels.

It localises to the nucleus. The protein localises to the nucleus speckle. It is found in the cytoplasm. Its function is as follows. Transcription factor that binds a palindromic (canonical) core consensus DNA sequence 5'-CANNTG- 3' known as an E-box element, possibly as a heterodimer with other bHLH proteins. Regulates endothelial cell proliferation, migration and tube-like structures formation. Modulates endothelial cell differentiation through NOS3. May be implicated in specification and differentiation of neuronal cell lineages in the brain. May participate in kidney development and may be involved in podocyte differentiation. During early embryonic development is involved in tissue-specific differentiation processes that are dependent on class II bHLH factors and namely modulates the differentiation program initiated by the pro-endocrine factor NEUROG3. During myogenesis, may play a role during the transition of myoblasts from the proliferative phase to the differentiation phase. Positively regulates HAMP transcription in two ways, firstly by acting directly on the HAMP promoter via E-boxes binding and indirectly through increased phosphorylation of SMAD protein complex. Repress NEUROG3-dependent gene activation in a gene-specific manner through at least two mechanisms; requires only either the sequestering of a general partner such as TCF3 through heterodimerization, either also requires binding of the bHLH domain to DNA via a basic motif. This Homo sapiens (Human) protein is Transcription factor ATOH8.